Here is a 431-residue protein sequence, read N- to C-terminus: Leucine carboxyl methyltransferase 1 (431 aa).

S-adenosyl-L-methionine contacts are provided by residues Arg103, Gly131, Asp159, and 219-220; that span reads DL. The interval 228–268 is disordered; that stretch reads QPQQPLPPGVPIGSRGLHASPFTPGSTTQHEEQTEETSLPQ. Position 289 (Glu289) interacts with S-adenosyl-L-methionine.

It belongs to the methyltransferase superfamily. LCMT family.

The enzyme catalyses [phosphatase 2A protein]-C-terminal L-leucine + S-adenosyl-L-methionine = [phosphatase 2A protein]-C-terminal L-leucine methyl ester + S-adenosyl-L-homocysteine. Functionally, methylates the carboxyl group of the C-terminal leucine residue of protein phosphatase 2A catalytic subunits to form alpha-leucine ester residues. In Neurospora crassa (strain ATCC 24698 / 74-OR23-1A / CBS 708.71 / DSM 1257 / FGSC 987), this protein is Leucine carboxyl methyltransferase 1 (ppm-1).